A 469-amino-acid polypeptide reads, in one-letter code: Uronate isomerase (469 aa).

It belongs to the metallo-dependent hydrolases superfamily. Uronate isomerase family.

The catalysed reaction is D-glucuronate = D-fructuronate. It carries out the reaction aldehydo-D-galacturonate = keto-D-tagaturonate. Its pathway is carbohydrate metabolism; pentose and glucuronate interconversion. The polypeptide is Uronate isomerase (Yersinia pseudotuberculosis serotype O:1b (strain IP 31758)).